The chain runs to 183 residues: Hypoxanthine/guanine phosphoribosyltransferase (183 aa).

This sequence belongs to the purine/pyrimidine phosphoribosyltransferase family. Archaeal HPRT subfamily. In terms of assembly, homodimer.

The protein resides in the cytoplasm. The enzyme catalyses IMP + diphosphate = hypoxanthine + 5-phospho-alpha-D-ribose 1-diphosphate. It carries out the reaction GMP + diphosphate = guanine + 5-phospho-alpha-D-ribose 1-diphosphate. It participates in purine metabolism; IMP biosynthesis via salvage pathway; IMP from hypoxanthine: step 1/1. Functionally, catalyzes a salvage reaction resulting in the formation of IMP that is energically less costly than de novo synthesis. This Methanocaldococcus jannaschii (strain ATCC 43067 / DSM 2661 / JAL-1 / JCM 10045 / NBRC 100440) (Methanococcus jannaschii) protein is Hypoxanthine/guanine phosphoribosyltransferase.